Consider the following 190-residue polypeptide: Acyl-acyl carrier protein thioesterase ATL3, chloroplastic (190 aa).

A chloroplast-targeting transit peptide spans 1–49 (MFLQVTGTATPAMPAVVFLNSWRRPLSIPLRSVKTFKPLAFFDLKGGKG). Residue Asp66 is part of the active site.

This sequence belongs to the 4-hydroxybenzoyl-CoA thioesterase family. In terms of tissue distribution, highly expressed in stems and flowers and at lower levels in rosette leaves, cauline leaves and siliques.

Its subcellular location is the plastid. It is found in the chloroplast. In terms of biological role, acyl-ACP thioesterase involved in the production of fatty acids and beta-keto fatty acids. Can produce fatty acids of long chain (14:1 and 16:1) and beta-keto fatty acids of medium to long chain (8:0, 10:0, 12:0, 12:1, 14:0 and 16:0) when expressed in a heterologous organism (E.coli). Possesses thioesterase activity for lauroyl-ACP (12:0-ACP) in vitro. May play a role in the generation of long fatty acids in the chloroplast. The polypeptide is Acyl-acyl carrier protein thioesterase ATL3, chloroplastic (Arabidopsis thaliana (Mouse-ear cress)).